We begin with the raw amino-acid sequence, 515 residues long: Ribonuclease Y (515 aa).

The chain crosses the membrane as a helical span at residues 6-26 (LTSFVIITLSLAVGLTGGYYG). A KH domain is found at 205 to 290 (TVSVVPLPND…EMVEKARKEI (86 aa)). One can recognise an HD domain in the interval 331–424 (VLRHSVEVAH…VQAADAISAS (94 aa)).

Belongs to the RNase Y family.

It is found in the cell membrane. In terms of biological role, endoribonuclease that initiates mRNA decay. The chain is Ribonuclease Y from Syntrophomonas wolfei subsp. wolfei (strain DSM 2245B / Goettingen).